The sequence spans 89 residues: Small ribosomal subunit protein uS15 (89 aa).

The protein belongs to the universal ribosomal protein uS15 family. As to quaternary structure, part of the 30S ribosomal subunit. Forms a bridge to the 50S subunit in the 70S ribosome, contacting the 23S rRNA.

One of the primary rRNA binding proteins, it binds directly to 16S rRNA where it helps nucleate assembly of the platform of the 30S subunit by binding and bridging several RNA helices of the 16S rRNA. Functionally, forms an intersubunit bridge (bridge B4) with the 23S rRNA of the 50S subunit in the ribosome. The protein is Small ribosomal subunit protein uS15 of Chlorobium limicola (strain DSM 245 / NBRC 103803 / 6330).